The sequence spans 157 residues: Lipoprotein signal peptidase (157 aa).

4 helical membrane passes run 10-30 (LVFMGGFFLIFGVDQAIKYAI), 38-58 (SLMVDIVLVFNKGVAFSLLSF), 59-79 (LEGGLKYLQILLILGLFIFLI), and 84-104 (LFKTHAIEFGMVFGAGVSNVL). Catalysis depends on residues aspartate 114 and aspartate 131. A helical membrane pass occupies residues 122–142 (FDFAIFNFADVMIDVGVGVLL).

This sequence belongs to the peptidase A8 family.

Its subcellular location is the cell inner membrane. The catalysed reaction is Release of signal peptides from bacterial membrane prolipoproteins. Hydrolyzes -Xaa-Yaa-Zaa-|-(S,diacylglyceryl)Cys-, in which Xaa is hydrophobic (preferably Leu), and Yaa (Ala or Ser) and Zaa (Gly or Ala) have small, neutral side chains.. Its pathway is protein modification; lipoprotein biosynthesis (signal peptide cleavage). This protein specifically catalyzes the removal of signal peptides from prolipoproteins. The sequence is that of Lipoprotein signal peptidase from Helicobacter pylori (strain HPAG1).